The following is a 116-amino-acid chain: uncharacterized protein (116 aa).

The interval 97 to 116 is disordered; it reads AKGKGNEGREEAEEASGKSK. A compositionally biased stretch (basic and acidic residues) spans 100–116; the sequence is KGNEGREEAEEASGKSK.

It belongs to the UPF0440 family.

This is an uncharacterized protein from Pyrococcus horikoshii (strain ATCC 700860 / DSM 12428 / JCM 9974 / NBRC 100139 / OT-3).